A 374-amino-acid chain; its full sequence is MAAMFSNTRSVASSSGHIVEFKAGRSRLEAGSGDTMRKVVAEPKKGLVFIKQSNDMLIHFCWKDRETGAVVDDLIIFPDDAEFKAVPGCPDGKVYMLKFKSGDMKLFWIQDSTPDVDKDLVKKVTDALNKPPTSRPAASRSAGSNANTDRQSAGGSLISSSDMNAPLGGIDQGQLMSLIQSLQGGNSDTLPISSVPRGEDASSEADCEPSTNAAEEGSSNPLSLNNPAIQQIFNNLGRSQKKEVAVSLATALSNETVAEVARNHAEELAPHLPTSDDPARELSETVRTPQFRQAADTLGHALQTGQLGPVVAQFGMDEATVGSANQGDIRGFAANLTKAEGGEDAAKTQNSDDDATREPEPKRNRPDNEDMDVD.

Positions 13 to 131 (SSSGHIVEFK…KKVTDALNKP (119 aa)) constitute a Pru domain. Disordered regions lie at residues 126–166 (DALN…MNAP), 187–223 (SDTL…NPLS), and 334–374 (ANLT…MDVD). Composition is skewed to polar residues over residues 141–163 (SAGS…SSDM) and 209–223 (PSTN…NPLS). In terms of domain architecture, DEUBAD spans 239–346 (SQKKEVAVSL…TKAEGGEDAA (108 aa)). A compositionally biased stretch (basic and acidic residues) spans 354-368 (DATREPEPKRNRPDN).

The protein belongs to the ADRM1 family. As to quaternary structure, component of the 19S proteasome regulatory particle complex. The 26S proteasome consists of a 20S core particle (CP) and two 19S regulatory subunits (RP). Interacts with deubiquitinase ubh-4.

Its subcellular location is the cytoplasm. The protein resides in the nucleus. In terms of biological role, may function as a proteasomal ubiquitin receptor. May promote the deubiquitinating activity associated with the 26S proteasome. This is Proteasomal ubiquitin receptor ADRM1 homolog from Caenorhabditis elegans.